We begin with the raw amino-acid sequence, 524 residues long: Na(+)/H(+) antiporter NhaG (524 aa).

A run of 11 helical transmembrane segments spans residues 6–26 (LHHIFELGFFVVMIAAGITAI), 33–53 (PYPIALVIVGTIIGLVHIPLF), 59–79 (FITEGEVFNFVIITLFLPALL), 98–118 (VLALFGGTLISFLIVGFSSMW), 126–146 (AAFVFAALMSATDPVSVLSIF), 169–189 (LAVVLFNISAFYLMTYLDLGI), 193–213 (GLGLWEFVKVISLGLIIGGVL), 242–262 (FLLAEMAGASGVIAVVVAALI), 283–303 (FWDVAALLANSLVFLMVGLEI), 312–332 (WGLAIMAIVIVLIARSAAVYI), and 374–394 (DILVFAFSVVLFSLVVQGLTI).

Belongs to the monovalent cation:proton antiporter 1 (CPA1) transporter (TC 2.A.36) family.

It is found in the cell membrane. In terms of biological role, na(+)/H(+) antiporter that extrudes sodium in exchange for external protons. Can also transport lithium. This Bacillus atrophaeus protein is Na(+)/H(+) antiporter NhaG (nhaG).